The chain runs to 634 residues: Probable threonine--tRNA ligase, cytoplasmic (634 aa).

The TGS domain maps to 1–61 (MSIYVTFKGQ…NENQKIELYD (61 aa)).

Belongs to the class-II aminoacyl-tRNA synthetase family.

The protein resides in the cytoplasm. It catalyses the reaction tRNA(Thr) + L-threonine + ATP = L-threonyl-tRNA(Thr) + AMP + diphosphate + H(+). This is Probable threonine--tRNA ligase, cytoplasmic from Enterocytozoon bieneusi (strain H348) (Microsporidian parasite).